The sequence spans 800 residues: Transducin beta-like protein 3 (800 aa).

Position 2 is an N-acetylalanine (alanine 2). WD repeat units lie at residues 64 to 105 (EDQE…RLWK), 107 to 146 (IHTAPVASMAFDATSTLLATGGCDGAVRVWDIVQHYGTHH), 149 to 190 (GSPG…CLAV), 193 to 232 (AHYSAVTSLSFSEDGHTMLSSGRDKICIVWDLRSYETSRT), 245 to 284 (LPEEPALALGVKNSGLHFLTAGDQGILRVWEAASGQCVYT), 290 to 329 (GLRQELTHCTLARAAGLLLTVTADHNLLLYEARSLQLQKQ), 332 to 372 (GYSE…CQIL), 374 to 413 (GHTDIVLALDVFRKGWLFASCAKDQSIRIWRMNKAGQVAC), 419 to 459 (GHTH…PSKN), 477 to 516 (CHDKDINSLAVSPNDKLLATGSQDRTAKLWALPQCQLLGV), 519 to 560 (GHRR…KTFE), 562 to 602 (HDAS…RTLD), and 604 to 642 (HEDKVWGLHCSRLDDHAITGGSDSRIILWKDVTEAEQAE). Lysine 407 is covalently cross-linked (Glycyl lysine isopeptide (Lys-Gly) (interchain with G-Cter in SUMO2)).

As to quaternary structure, part of the small subunit (SSU) processome, composed of more than 70 proteins and the RNA chaperone small nucleolar RNA (snoRNA) U3.

Its subcellular location is the nucleus. The protein localises to the nucleolus. Its function is as follows. Part of the small subunit (SSU) processome, first precursor of the small eukaryotic ribosomal subunit. During the assembly of the SSU processome in the nucleolus, many ribosome biogenesis factors, an RNA chaperone and ribosomal proteins associate with the nascent pre-rRNA and work in concert to generate RNA folding, modifications, rearrangements and cleavage as well as targeted degradation of pre-ribosomal RNA by the RNA exosome. This Rattus norvegicus (Rat) protein is Transducin beta-like protein 3 (Tbl3).